The following is a 189-amino-acid chain: Small ribosomal subunit protein uS5 (189 aa).

The S5 DRBM domain maps to 20–83 (FVDRLVHINR…ESAKRALIRV (64 aa)).

The protein belongs to the universal ribosomal protein uS5 family. Part of the 30S ribosomal subunit. Contacts proteins S4 and S8.

Functionally, with S4 and S12 plays an important role in translational accuracy. Located at the back of the 30S subunit body where it stabilizes the conformation of the head with respect to the body. In Beijerinckia indica subsp. indica (strain ATCC 9039 / DSM 1715 / NCIMB 8712), this protein is Small ribosomal subunit protein uS5.